Consider the following 346-residue polypeptide: Inner membrane protein YnjI (346 aa).

The Periplasmic portion of the chain corresponds to 1–38 (MKKVLLQNHPGSEKYSFNGWEIFNSNFERMIKENKAML). The helical transmembrane segment at 39 to 59 (LCKWGFYLTCVVAVMFVFAAI) threads the bilayer. The Cytoplasmic segment spans residues 60–68 (TSNGLNERG). A helical membrane pass occupies residues 69-89 (LITAGCSFLYLLIMMGLIVRA). The Periplasmic segment spans residues 90-234 (GFKAKKEQLH…DCANHSSGKS (145 aa)). A helical membrane pass occupies residues 235–255 (SAKLIWAAELSWMISISSTAF). The Cytoplasmic segment spans residues 256–346 (QNGTIEEELA…PWGASSVKYS (91 aa)).

The protein localises to the cell inner membrane. The polypeptide is Inner membrane protein YnjI (ynjI) (Escherichia coli (strain K12)).